We begin with the raw amino-acid sequence, 277 residues long: NAD kinase (277 aa).

Asp55 acts as the Proton acceptor in catalysis. Residues 55-56 (DG), 131-132 (NE), Arg157, Asp159, and 170-175 (TAYNKS) contribute to the NAD(+) site.

It belongs to the NAD kinase family. A divalent metal cation is required as a cofactor.

It localises to the cytoplasm. The enzyme catalyses NAD(+) + ATP = ADP + NADP(+) + H(+). In terms of biological role, involved in the regulation of the intracellular balance of NAD and NADP, and is a key enzyme in the biosynthesis of NADP. Catalyzes specifically the phosphorylation on 2'-hydroxyl of the adenosine moiety of NAD to yield NADP. This chain is NAD kinase, found in Streptococcus mutans serotype c (strain ATCC 700610 / UA159).